A 490-amino-acid chain; its full sequence is Betaine aldehyde dehydrogenase (490 aa).

Residues Ile27 and Asp93 each contribute to the K(+) site. 150 to 152 (GAW) is a binding site for NAD(+). Lys162 serves as the catalytic Charge relay system. 176-179 (KPSE) lines the NAD(+) pocket. Residue Val180 participates in K(+) binding. Residue 230 to 233 (GTTT) coordinates NAD(+). Position 246 (Leu246) interacts with K(+). The Proton acceptor role is filled by Glu252. Positions 254, 286, and 387 each coordinate NAD(+). Residue Cys286 is the Nucleophile of the active site. At Cys286 the chain carries Cysteine sulfenic acid (-SOH). The K(+) site is built by Lys457 and Gly460. The Charge relay system role is filled by Glu464.

This sequence belongs to the aldehyde dehydrogenase family. Dimer of dimers. Requires K(+) as cofactor.

The enzyme catalyses betaine aldehyde + NAD(+) + H2O = glycine betaine + NADH + 2 H(+). It functions in the pathway amine and polyamine biosynthesis; betaine biosynthesis via choline pathway; betaine from betaine aldehyde: step 1/1. Its function is as follows. Involved in the biosynthesis of the osmoprotectant glycine betaine. Catalyzes the irreversible oxidation of betaine aldehyde to the corresponding acid. The sequence is that of Betaine aldehyde dehydrogenase from Pseudomonas putida (strain ATCC 700007 / DSM 6899 / JCM 31910 / BCRC 17059 / LMG 24140 / F1).